A 409-amino-acid chain; its full sequence is Peptidase T (409 aa).

Histidine 78 provides a ligand contact to Zn(2+). Aspartate 80 is an active-site residue. Aspartate 140 is a binding site for Zn(2+). The active-site Proton acceptor is glutamate 173. Glutamate 174, aspartate 196, and histidine 379 together coordinate Zn(2+).

Belongs to the peptidase M20B family. Zn(2+) is required as a cofactor.

The protein localises to the cytoplasm. The enzyme catalyses Release of the N-terminal residue from a tripeptide.. Functionally, cleaves the N-terminal amino acid of tripeptides. The polypeptide is Peptidase T (Escherichia coli (strain SE11)).